We begin with the raw amino-acid sequence, 63 residues long: ATP synthase membrane subunit K, mitochondrial (63 aa).

A helical membrane pass occupies residues 15–37 (TMRGRANVAKATWASLGLVYVLV).

F-type ATPases have 2 components, CF(1) - the catalytic core - and CF(0) - the membrane proton channel. CF(1) has five subunits: alpha(3), beta(3), gamma(1), delta(1), epsilon(1). CF(0) has three main subunits: a, b and c. The ATP synthase complex/complex V exists as a monomeric and a dimeric supercomplex that helps shape mitochondrial cristae to optimize proton flow.

It is found in the mitochondrion membrane. Functionally, mitochondrial membrane ATP synthase (F(1)F(0) ATP synthase or Complex V) produces ATP from ADP in the presence of a proton gradient across the membrane which is generated by electron transport complexes of the respiratory chain. F-type ATPases consist of two structural domains, F(1) - containing the extramembraneous catalytic core and F(0) - containing the membrane proton channel, linked together by a central stalk and a peripheral stalk. During catalysis, ATP synthesis in the catalytic domain of F(1) is coupled via a rotary mechanism of the central stalk subunits to proton translocation. ATP5MK is a minor subunit of the mitochondrial membrane ATP synthase required for dimerization of the ATP synthase complex and as such regulates ATP synthesis in the mitochondria. This chain is ATP synthase membrane subunit K, mitochondrial, found in Drosophila melanogaster (Fruit fly).